The sequence spans 480 residues: Peptidase S41 family protein ustP (480 aa).

Positions 78-97 (CMPNKKSRPPDPRPSLAVGK) are disordered. A peptidase S41 domain region spans residues 134 to 336 (DVAVLQLPTF…LKQQGVRSIV (203 aa)).

It belongs to the peptidase S41A family.

It participates in mycotoxin biosynthesis. Peptidase S41 family protein; part of the gene cluster that mediates the biosynthesis of the secondary metabolite ustiloxin B, an antimitotic tetrapeptide. First, ustA is processed by the subtilisin-like endoprotease Kex2 that is outside the ustiloxin B gene cluster, at the C-terminal side of Arg-Lys, after transfer to Golgi apparatus through the endoplasmic reticulum (ER). Cleavage by KEX2 generates 16 peptides YAIG-I to YAIG-XVI. To process the precursor peptide further, at least two peptidases are necessary to cleave the N-terminal and C-terminal sides of the Tyr-Ala-Ile-Gly core peptide which serves as backbone for the synthesis of ustiloxin B, through cyclization and modification of the tyrosine with a non-protein coding amino acid, norvaline. One of the two peptidases must be the serine peptidase ustP; and the other pepdidase is probably ustH. Macrocyclization of the core peptide derived from ustA requires the tyrosinase ustQ, as well as the homologous oxidases ustYa and ustYb, and leads to the production of the first cyclization product N-desmethylustiloxin F. For the formation of N-desmethylustiloxin F, three oxidation steps are required, hydroxylation at the benzylic position, hydroxylation at either the aromatic ring of Tyr or beta-position of Ile, and oxidative cyclization. UstQ may catalyze the oxidation of a phenol moiety, whereas the ustYa and ustYb are most likely responsible for the remaining two-step oxidations. N-desmethylustiloxin F is then methylated by ustM to yield ustiloxin F which in turn substrate of the cytochrome P450 monooxygenase ustC which catalyzes the formation of S-deoxyustiloxin H. The flavoprotein monooxygenases ustF1 and ustF2 then participate in the modification of the side chain of S-deoxyustiloxin H, leading to the synthesis of an oxime intermediate, via ustiloxin H. Finally, carboxylative dehydration performed by the cysteine desulfurase-like protein ustD yields ustiloxin B. The protein is Peptidase S41 family protein ustP of Aspergillus flavus (strain ATCC 200026 / FGSC A1120 / IAM 13836 / NRRL 3357 / JCM 12722 / SRRC 167).